A 583-amino-acid chain; its full sequence is Cell division protein FtsZ (583 aa).

GTP is bound by residues 24–28 (GGGGN), 111–113 (GTG), Glu-142, Arg-146, and Asp-190. 2 disordered regions span residues 391-425 (HQQP…VQQA) and 510-583 (TNSL…RQSN). The segment covering 412-425 (APAALRPAQPVQQA) has biased composition (low complexity).

The protein belongs to the FtsZ family. As to quaternary structure, homodimer. Polymerizes to form a dynamic ring structure in a strictly GTP-dependent manner. Interacts directly with several other division proteins.

The protein localises to the cytoplasm. Essential cell division protein that forms a contractile ring structure (Z ring) at the future cell division site. The regulation of the ring assembly controls the timing and the location of cell division. One of the functions of the FtsZ ring is to recruit other cell division proteins to the septum to produce a new cell wall between the dividing cells. Binds GTP and shows GTPase activity. The protein is Cell division protein FtsZ of Rhizobium radiobacter (Agrobacterium tumefaciens).